The chain runs to 117 residues: Replication initiation control protein YabA (117 aa).

The tract at residues 45 to 81 is disordered; the sequence is NQHLRERLDQSDRDKSSETENDSAQKPGHSDIGEGHD. 2 stretches are compositionally biased toward basic and acidic residues: residues 46 to 62 and 72 to 81; these read QHLR…KSSE and GHSDIGEGHD. 4 residues coordinate Zn(2+): His92, Cys94, Cys107, and Cys110.

Belongs to the YabA family. In terms of assembly, homotetramer. Interacts with both DnaA and DnaN, acting as a bridge between these two proteins. The cofactor is Zn(2+).

It localises to the cytoplasm. It is found in the nucleoid. Functionally, involved in control of chromosome replication initiation. Inhibits the cooperative binding of DnaA to the oriC region, thus negatively regulating initiation of chromosome replication. Inhibits the ability of DnaA-ATP to form a helix on DNA; does not disassemble preformed DnaA-DNA helices. Decreases the residence time of DnaA on the chromosome at its binding sites (oriC, replication forks and promoter-binding sites). Tethers DnaA to the replication machinery via the DNA polymerase beta sliding clamp subunit (dnaN). Associates with oriC and other DnaA targets on the chromosome in a DnaA-dependent manner. This is Replication initiation control protein YabA from Bacillus pumilus (strain SAFR-032).